We begin with the raw amino-acid sequence, 463 residues long: Lipase 5 (463 aa).

Positions 1–14 (MLYLILFLIAPIYA) are cleaved as a signal peptide. A disulfide bond links Cys110 and Cys281. Catalysis depends on Ser194, which acts as the Charge relay system. Residue Asn229 is glycosylated (N-linked (GlcNAc...) asparagine). Active-site charge relay system residues include Asp343 and His376. Cys359 and Cys404 are disulfide-bonded.

Belongs to the AB hydrolase superfamily. Lipase family. Class Lip subfamily.

It localises to the secreted. The catalysed reaction is a triacylglycerol + H2O = a diacylglycerol + a fatty acid + H(+). Fe(2)+, Fe(3+), Hg(2+) as well as ethylenediaminetetraacetic acid (EDTA) and phenylmethanesulfonyl fluoride (PMSF) strongly inhibit the lipase activity. Surfactants such as Tween 20, Tween 80 and TritonX-100 show also inhibitory effect in the lipase activity. Sodium dodecyl sulfate (SDS) sharply decreases the lipase activity by 85%. Methanol, ethanol, and acetone have also negative effect on the lipase activity, with residual activities at 48%, 24% and 44% respectively. Finally, lipase activity is almost lost in the presence of isopropanol alcohol. Functionally, secreted lipase that is able to hydrolyze both the neutral triacylglycerols and the monopalmitate ester Tween 40, allowing the use of hydrolyzed products as carbon sources. Exhibits a preference for the short and medium chain length p-NP (C4 and C8 acyl group) esters rather than the long chain length p-NP esters (C12, C16 and C18 acyl group). Has broad lipolytic activity, which may be important for colonization and subsequent infection, therefore contributing to the persistence and virulence in human tissue. The sequence is that of Lipase 5 from Candida albicans (strain SC5314 / ATCC MYA-2876) (Yeast).